The sequence spans 48 residues: IIECFFSCEIEKDGKSKEGKPCKPKGDKDKDKKCSGGWRCKIKMCLKI.

Intrachain disulfides connect C4–C34, C8–C40, and C22–C45. M44 carries the methionine sulfoxide; partial modification.

This sequence belongs to the neurotoxin 12 (Hwtx-2) family. 01 (Ap1a) subfamily. As to expression, expressed by the venom gland.

Its subcellular location is the secreted. In terms of biological role, is toxic to both insects and mammals. Induces reversible paralysis when injected into S.frugiperda larvae. Reduces both the amplitude and frequency of responses from muscle (GF-TTM and GF-DLM) pathways in the D.melanogaster giant fiber circuit, suggesting an action at the neuromuscular junction, which is mediated by glutamatergic receptors. In mice, intracranial injection of 30 ug causes increased urination, myoclonus, hypermotility with circular movements followed by respiratory and generalized seizures resulting in death within 25-35 minutes of injection. This chain is U1-theraphotoxin-Agm1a, found in Acanthoscurria gomesiana (Tarantula spider).